A 286-amino-acid chain; its full sequence is 3-amino-tetrahydro-pyrrolizinone reductase (286 aa).

The active-site Proton acceptor is the Y146.

The protein belongs to the short-chain dehydrogenases/reductases (SDR) family.

It carries out the reaction 3-amino-5,6,7,7a-tetrahydro-1H-pyrrolizin-1-one + AH2 = 3-amino-tetrahydro-1H-pyrrolizin-1-ol + A. Functionally, involved in the biosynthetic pathway of pyrrolizwilline, a pyrrolizidine alkaloid. Catalyzes the reduction of 3-amino-tetrahydro-pyrrolizinone to 3-amino-tetrahydro-pyrrolizinol. The sequence is that of 3-amino-tetrahydro-pyrrolizinone reductase (xhpD) from Xenorhabdus hominickii.